The sequence spans 152 residues: Large ribosomal subunit protein uL13 (152 aa).

Belongs to the universal ribosomal protein uL13 family. As to quaternary structure, part of the 50S ribosomal subunit.

Functionally, this protein is one of the early assembly proteins of the 50S ribosomal subunit, although it is not seen to bind rRNA by itself. It is important during the early stages of 50S assembly. This chain is Large ribosomal subunit protein uL13, found in Wolbachia sp. subsp. Drosophila simulans (strain wRi).